Consider the following 190-residue polypeptide: UPF0301 protein Psyr_0485 (190 aa).

Belongs to the UPF0301 (AlgH) family.

In Pseudomonas syringae pv. syringae (strain B728a), this protein is UPF0301 protein Psyr_0485.